Here is a 589-residue protein sequence, read N- to C-terminus: Aspartate--tRNA ligase (589 aa).

L-aspartate is bound at residue Glu175. An aspartate region spans residues 199–202 (QLFK). Position 221 (Arg221) interacts with L-aspartate. ATP contacts are provided by residues 221–223 (RDE) and Gln230. His449 contacts L-aspartate. Glu483 is a binding site for ATP. An L-aspartate-binding site is contributed by Arg490. 535-538 (GLDR) is a binding site for ATP.

It belongs to the class-II aminoacyl-tRNA synthetase family. Type 1 subfamily. In terms of assembly, homodimer.

It localises to the cytoplasm. It catalyses the reaction tRNA(Asp) + L-aspartate + ATP = L-aspartyl-tRNA(Asp) + AMP + diphosphate. In terms of biological role, catalyzes the attachment of L-aspartate to tRNA(Asp) in a two-step reaction: L-aspartate is first activated by ATP to form Asp-AMP and then transferred to the acceptor end of tRNA(Asp). The chain is Aspartate--tRNA ligase from Lysinibacillus sphaericus (strain C3-41).